An 89-amino-acid polypeptide reads, in one-letter code: Putative membrane protein insertion efficiency factor (89 aa).

Residues 69–89 are disordered; sequence DPVPPAHTERGGTMCPSRLPE.

It belongs to the UPF0161 family.

The protein localises to the cell inner membrane. Could be involved in insertion of integral membrane proteins into the membrane. This Paramagnetospirillum magneticum (strain ATCC 700264 / AMB-1) (Magnetospirillum magneticum) protein is Putative membrane protein insertion efficiency factor.